The chain runs to 118 residues: Ribonuclease P protein component (118 aa).

Belongs to the RnpA family. Consists of a catalytic RNA component (M1 or rnpB) and a protein subunit.

It carries out the reaction Endonucleolytic cleavage of RNA, removing 5'-extranucleotides from tRNA precursor.. RNaseP catalyzes the removal of the 5'-leader sequence from pre-tRNA to produce the mature 5'-terminus. It can also cleave other RNA substrates such as 4.5S RNA. The protein component plays an auxiliary but essential role in vivo by binding to the 5'-leader sequence and broadening the substrate specificity of the ribozyme. The chain is Ribonuclease P protein component from Desulfatibacillum aliphaticivorans.